We begin with the raw amino-acid sequence, 122 residues long: uncharacterized protein (122 aa).

A signal peptide spans 1 to 20 (MGFHFCIWIIFLLPPPCKKC).

It is found in the secreted. This is an uncharacterized protein from Homo sapiens (Human).